Here is a 517-residue protein sequence, read N- to C-terminus: Bifunctional purine biosynthesis protein PurH (517 aa).

The MGS-like domain occupies 1–145 (MSPLALVSVS…KNHKDVSVLV (145 aa)).

This sequence belongs to the PurH family.

The catalysed reaction is (6R)-10-formyltetrahydrofolate + 5-amino-1-(5-phospho-beta-D-ribosyl)imidazole-4-carboxamide = 5-formamido-1-(5-phospho-D-ribosyl)imidazole-4-carboxamide + (6S)-5,6,7,8-tetrahydrofolate. It carries out the reaction IMP + H2O = 5-formamido-1-(5-phospho-D-ribosyl)imidazole-4-carboxamide. It functions in the pathway purine metabolism; IMP biosynthesis via de novo pathway; 5-formamido-1-(5-phospho-D-ribosyl)imidazole-4-carboxamide from 5-amino-1-(5-phospho-D-ribosyl)imidazole-4-carboxamide (10-formyl THF route): step 1/1. It participates in purine metabolism; IMP biosynthesis via de novo pathway; IMP from 5-formamido-1-(5-phospho-D-ribosyl)imidazole-4-carboxamide: step 1/1. This is Bifunctional purine biosynthesis protein PurH from Prochlorococcus marinus subsp. pastoris (strain CCMP1986 / NIES-2087 / MED4).